Here is an 85-residue protein sequence, read N- to C-terminus: Large ribosomal subunit protein bL27 (85 aa).

The segment at 1-20 (MATKKAGGSTRNGRDSEAKR) is disordered.

It belongs to the bacterial ribosomal protein bL27 family.

The protein is Large ribosomal subunit protein bL27 of Actinobacillus pleuropneumoniae serotype 5b (strain L20).